A 378-amino-acid chain; its full sequence is Alanine dehydrogenase (378 aa).

Positions 15 and 74 each coordinate substrate. Residue H95 is the Proton donor/acceptor of the active site. NAD(+) is bound by residues S132, 176 to 177 (VV), D196, S218, 237 to 238 (VL), 265 to 268 (VAID), and 297 to 300 (VANM). D268 (proton donor/acceptor) is an active-site residue.

The protein belongs to the AlaDH/PNT family. As to quaternary structure, homohexamer. Trimer of dimer.

The protein localises to the cytoplasm. The catalysed reaction is L-alanine + NAD(+) + H2O = pyruvate + NH4(+) + NADH + H(+). Its pathway is amino-acid degradation; L-alanine degradation via dehydrogenase pathway; NH(3) and pyruvate from L-alanine: step 1/1. In terms of biological role, catalyzes the reversible oxidative deamination of L-alanine to pyruvate. Oxidative deamination proceeds through a sequential, ordered ternary-binary mechanism, where NAD(+) binds first followed by L-alanine; the products are released in the order ammonia, pyruvate and NADH. Disruption blocks sporulation probably in stage V; 20-30% sporulation can be restored if the media is supplemented with pyruvate, suggesting lack of pyruvate blocks sporulation. Thus it is a key factor in the assimilation of L-alanine as an energy source via the tricarboxylic acid cycle during sporulation. This chain is Alanine dehydrogenase, found in Bacillus subtilis (strain 168).